An 892-amino-acid chain; its full sequence is Translation initiation factor IF-2 (892 aa).

The segment at 88-306 is disordered; sequence KKRTFVKRDP…LQQGFQKPAQ (219 aa). 2 stretches are compositionally biased toward basic and acidic residues: residues 93 to 159 and 166 to 216; these read VKRD…KDKV and DMIK…EENK. Residues 254 to 269 are compositionally biased toward basic residues; the sequence is GRGRNAKAARPAKKGK. Positions 270–282 are enriched in basic and acidic residues; it reads HAESKADREEARA. The tr-type G domain occupies 391-560; it reads PRAPVVTIMG…LLQAEVLELK (170 aa). Residues 400–407 are G1; sequence GHVDHGKT. 400-407 provides a ligand contact to GTP; sequence GHVDHGKT. A G2 region spans residues 425-429; sequence GITQH. Residues 446–449 form a G3 region; it reads DTPG. GTP contacts are provided by residues 446 to 450 and 500 to 503; these read DTPGH and NKID. The segment at 500–503 is G4; the sequence is NKID. Residues 536-538 are G5; the sequence is SAK.

It belongs to the TRAFAC class translation factor GTPase superfamily. Classic translation factor GTPase family. IF-2 subfamily.

The protein localises to the cytoplasm. In terms of biological role, one of the essential components for the initiation of protein synthesis. Protects formylmethionyl-tRNA from spontaneous hydrolysis and promotes its binding to the 30S ribosomal subunits. Also involved in the hydrolysis of GTP during the formation of the 70S ribosomal complex. This Salmonella schwarzengrund (strain CVM19633) protein is Translation initiation factor IF-2.